We begin with the raw amino-acid sequence, 208 residues long: Thymidylate kinase (208 aa).

11–18 is an ATP binding site; that stretch reads GGEGAGKS.

This sequence belongs to the thymidylate kinase family.

The enzyme catalyses dTMP + ATP = dTDP + ADP. Phosphorylation of dTMP to form dTDP in both de novo and salvage pathways of dTTP synthesis. In Caulobacter vibrioides (strain ATCC 19089 / CIP 103742 / CB 15) (Caulobacter crescentus), this protein is Thymidylate kinase (tmk).